Consider the following 429-residue polypeptide: CinA-like protein (429 aa).

This sequence belongs to the CinA family.

The sequence is that of CinA-like protein from Prochlorococcus marinus (strain MIT 9313).